A 250-amino-acid chain; its full sequence is Recombination protein RecR (250 aa).

Residues 56–71 form a C4-type zinc finger; it reads CRICHNISQEDVCRIC. A Toprim domain is found at 79-227; the sequence is SIICVVEESK…TVTRLASGIP (149 aa). The segment at 148-172 is disordered; it reads LGDADTPADGESSGADAAETGNAKT.

It belongs to the RecR family.

May play a role in DNA repair. It seems to be involved in an RecBC-independent recombinational process of DNA repair. It may act with RecF and RecO. This chain is Recombination protein RecR, found in Corynebacterium jeikeium (strain K411).